The chain runs to 510 residues: Serine carboxypeptidase 1 (510 aa).

An N-terminal signal peptide occupies residues 1-25 (MARRGRRSLASPAVAIALFVFLAYG). Residues 26–36 (GGGGGGGVCEA) constitute a propeptide that is removed on maturation. Intrachain disulfides connect Cys-98-Cys-399, Cys-262-Cys-274, and Cys-297-Cys-366. The N-linked (GlcNAc...) asparagine glycan is linked to Asn-154. Residue Ser-194 is part of the active site. An N-linked (GlcNAc...) asparagine glycan is attached at Asn-268. The propeptide at 303-362 (IKKVTPANTKLPKSFQHLGTTTKPLAVRTRMHGRAWPLRAPVRAGRVPSWQEFARGSRPS) is linker peptide. Asn-418 carries an N-linked (GlcNAc...) asparagine glycan. Active-site residues include Asp-434 and His-487. A Microbody targeting signal motif is present at residues 508 to 510 (SKL).

Belongs to the peptidase S10 family.

The enzyme catalyses Release of a C-terminal amino acid with broad specificity.. This is Serine carboxypeptidase 1 (CBP1) from Oryza sativa subsp. japonica (Rice).